Reading from the N-terminus, the 349-residue chain is Phosphoribosylformylglycinamidine cyclo-ligase (349 aa).

This sequence belongs to the AIR synthase family.

It localises to the cytoplasm. The catalysed reaction is 2-formamido-N(1)-(5-O-phospho-beta-D-ribosyl)acetamidine + ATP = 5-amino-1-(5-phospho-beta-D-ribosyl)imidazole + ADP + phosphate + H(+). The protein operates within purine metabolism; IMP biosynthesis via de novo pathway; 5-amino-1-(5-phospho-D-ribosyl)imidazole from N(2)-formyl-N(1)-(5-phospho-D-ribosyl)glycinamide: step 2/2. The chain is Phosphoribosylformylglycinamidine cyclo-ligase from Listeria monocytogenes serovar 1/2a (strain ATCC BAA-679 / EGD-e).